The primary structure comprises 210 residues: Endonuclease III (210 aa).

The 20-residue stretch at Phe108–Asn127 folds into the HhH domain. 4 residues coordinate [4Fe-4S] cluster: Cys187, Cys194, Cys197, and Cys203.

This sequence belongs to the Nth/MutY family. The cofactor is [4Fe-4S] cluster.

The catalysed reaction is 2'-deoxyribonucleotide-(2'-deoxyribose 5'-phosphate)-2'-deoxyribonucleotide-DNA = a 3'-end 2'-deoxyribonucleotide-(2,3-dehydro-2,3-deoxyribose 5'-phosphate)-DNA + a 5'-end 5'-phospho-2'-deoxyribonucleoside-DNA + H(+). Its function is as follows. DNA repair enzyme that has both DNA N-glycosylase activity and AP-lyase activity. The DNA N-glycosylase activity releases various damaged pyrimidines from DNA by cleaving the N-glycosidic bond, leaving an AP (apurinic/apyrimidinic) site. The AP-lyase activity cleaves the phosphodiester bond 3' to the AP site by a beta-elimination, leaving a 3'-terminal unsaturated sugar and a product with a terminal 5'-phosphate. The protein is Endonuclease III of Rickettsia conorii (strain ATCC VR-613 / Malish 7).